The sequence spans 986 residues: Rho guanine nucleotide exchange factor 2 (986 aa).

The Phorbol-ester/DAG-type zinc-finger motif lies at 39–86 (GHLFTTISVSGMTMCYACNKSITAKEALICPTCNVTIHNRCKDTLANC). Phosphoserine is present on residues S109, S122, S129, S133, and S137. The segment at 131-161 (RQSLLGSRRGRSSLSLAKSVSTTNIAGHFND) is interaction with DYNLT1. S143 bears the Phosphoserine; by PAK4 mark. A phosphoserine mark is found at S151, S163, S172, S174, and S177. The DH domain maps to 235 to 432 (KQQDVIYELI…KELLSNVDEG (198 aa)). K353 carries the post-translational modification N6-acetyllysine. Positions 472 to 571 (KLIHDGCLLW…WIRVIQQSVR (100 aa)) constitute a PH domain. Residues 587-611 (EAYLRRIKMELQQKDRALVELLREK) adopt a coiled-coil conformation. Phosphoserine occurs at positions 645 and 648. The residue at position 679 (T679) is a Phosphothreonine; by MAPK1 or MAPK3. The segment at 683 to 705 (PALPLEPDSGGNTSPGVTANGEA) is disordered. S691, S696, S711, and S782 each carry phosphoserine. The stretch at 798-867 (EKQATELALL…RQLAALGQTE (70 aa)) forms a coiled coil. The segment at 862–986 (ALGQTEPLPA…RDGEAVASES (125 aa)) is disordered. S886 is modified (phosphoserine; by PAK1 and AURKA). Phosphotyrosine is present on Y894. Position 896 is a phosphoserine; by PAK4 (S896). The span at 920 to 939 (RNFEDRERQELGSPEERLQD) shows a compositional bias: basic and acidic residues. 3 positions are modified to phosphoserine: S932, S940, and S941. The span at 941–950 (SDPDTGSEEE) shows a compositional bias: acidic residues. Phosphothreonine is present on T945. S947, S952, S953, S956, and S960 each carry phosphoserine.

Found in a complex composed at least of ARHGEF2, NOD2 and RIPK2. Interacts with RIPK2; the interaction mediates tyrosine phosphorylation of RIPK2 by Src kinase CSK. Interacts with RIPK1 and RIPK3. Interacts with YWHAZ/14-3-3 zeta; when phosphorylated at Ser-886. Interacts with the kinases PAK4, AURKA and MAPK1. Interacts with RHOA and RAC1. Interacts with NOD1. Interacts (via the N-terminal zinc finger) with CAPN6 (via domain II). Interacts with DYNLT1. Phosphorylation of Ser-886 by PAK1 induces binding to protein YWHAZ, promoting its relocation to microtubules and the inhibition of its activity. Phosphorylated by AURKA and CDK1 during mitosis, which negatively regulates its activity. Phosphorylation by MAPK1 or MAPK3 increases nucleotide exchange activity. Phosphorylation by PAK4 releases GEF-H1 from the microtubules. Phosphorylated on serine, threonine and tyrosine residues in a RIPK2-dependent manner.

It localises to the cytoplasm. The protein localises to the cytoskeleton. Its subcellular location is the cell junction. It is found in the tight junction. The protein resides in the golgi apparatus. It localises to the spindle. The protein localises to the cell projection. Its subcellular location is the ruffle membrane. It is found in the cytoplasmic vesicle. Its function is as follows. Activates Rho-GTPases by promoting the exchange of GDP for GTP. May be involved in epithelial barrier permeability, cell motility and polarization, dendritic spine morphology, antigen presentation, leukemic cell differentiation, cell cycle regulation, innate immune response, and cancer. Binds Rac-GTPases, but does not seem to promote nucleotide exchange activity toward Rac-GTPases, which was uniquely reported in PubMed:9857026. May stimulate instead the cortical activity of Rac. Inactive toward CDC42, TC10, or Ras-GTPases. Forms an intracellular sensing system along with NOD1 for the detection of microbial effectors during cell invasion by pathogens. Required for RHOA and RIP2 dependent NF-kappaB signaling pathways activation upon S.flexneri cell invasion. Involved not only in sensing peptidoglycan (PGN)-derived muropeptides through NOD1 that is independent of its GEF activity, but also in the activation of NF-kappaB by Shigella effector proteins (IpgB2 and OspB) which requires its GEF activity and the activation of RhoA. Involved in innate immune signaling transduction pathway promoting cytokine IL6/interleukin-6 and TNF-alpha secretion in macrophage upon stimulation by bacterial peptidoglycans; acts as a signaling intermediate between NOD2 receptor and RIPK2 kinase. Contributes to the tyrosine phosphorylation of RIPK2 through Src tyrosine kinase leading to NF-kappaB activation by NOD2. Overexpression activates Rho-, but not Rac-GTPases, and increases paracellular permeability. Involved in neuronal progenitor cell division and differentiation. Involved in the migration of precerebellar neurons. This is Rho guanine nucleotide exchange factor 2 (ARHGEF2) from Homo sapiens (Human).